A 92-amino-acid polypeptide reads, in one-letter code: Small ribosomal subunit protein bS20 (92 aa).

2 disordered regions span residues 1-25 and 68-92; these read MALR…NRAK and HKNA…AQQA. Residues 80 to 92 are compositionally biased toward low complexity; the sequence is AKAINKAKAAQQA.

Belongs to the bacterial ribosomal protein bS20 family.

Functionally, binds directly to 16S ribosomal RNA. The polypeptide is Small ribosomal subunit protein bS20 (Deinococcus radiodurans (strain ATCC 13939 / DSM 20539 / JCM 16871 / CCUG 27074 / LMG 4051 / NBRC 15346 / NCIMB 9279 / VKM B-1422 / R1)).